The primary structure comprises 123 residues: UPF0102 protein Maqu_2464 (123 aa).

It belongs to the UPF0102 family.

This is UPF0102 protein Maqu_2464 from Marinobacter nauticus (strain ATCC 700491 / DSM 11845 / VT8) (Marinobacter aquaeolei).